The primary structure comprises 782 residues: LPS-assembly protein LptD (782 aa).

Residues 1–23 (MNKKHTLISLAILTALYSQQSLA) form the signal peptide.

It belongs to the LptD family. In terms of assembly, component of the lipopolysaccharide transport and assembly complex. Interacts with LptE and LptA.

Its subcellular location is the cell outer membrane. In terms of biological role, together with LptE, is involved in the assembly of lipopolysaccharide (LPS) at the surface of the outer membrane. The protein is LPS-assembly protein LptD of Haemophilus influenzae (strain ATCC 51907 / DSM 11121 / KW20 / Rd).